A 328-amino-acid polypeptide reads, in one-letter code: DNA-directed RNA polymerase subunit alpha 1 (328 aa).

An alpha N-terminal domain (alpha-NTD) region spans residues 1-234 (MQGFVKDFLK…GQLDEFVDER (234 aa)). The tract at residues 248 to 328 (FDPILLRPVN…NWPPASLIED (81 aa)) is alpha C-terminal domain (alpha-CTD).

Belongs to the RNA polymerase alpha chain family. In terms of assembly, homodimer. The RNAP catalytic core consists of 2 alpha, 1 beta, 1 beta' and 1 omega subunit. When a sigma factor is associated with the core the holoenzyme is formed, which can initiate transcription.

The catalysed reaction is RNA(n) + a ribonucleoside 5'-triphosphate = RNA(n+1) + diphosphate. Its function is as follows. DNA-dependent RNA polymerase catalyzes the transcription of DNA into RNA using the four ribonucleoside triphosphates as substrates. This Psychromonas ingrahamii (strain DSM 17664 / CCUG 51855 / 37) protein is DNA-directed RNA polymerase subunit alpha 1.